The primary structure comprises 79 residues: Cell division protein ZapB (79 aa).

A coiled-coil region spans residues 3–79 (LEVFEKLEAK…QALLGRMEEV (77 aa)).

It belongs to the ZapB family. In terms of assembly, homodimer. The ends of the coiled-coil dimer bind to each other, forming polymers. Interacts with FtsZ.

It is found in the cytoplasm. In terms of biological role, non-essential, abundant cell division factor that is required for proper Z-ring formation. It is recruited early to the divisome by direct interaction with FtsZ, stimulating Z-ring assembly and thereby promoting cell division earlier in the cell cycle. Its recruitment to the Z-ring requires functional FtsA or ZipA. The protein is Cell division protein ZapB of Salmonella typhi.